The sequence spans 163 residues: Succinate dehydrogenase assembly factor 2, mitochondrial (163 aa).

Belongs to the SDHAF2 family. Interacts with the flavoprotein subunit within the SDH catalytic dimer.

The protein resides in the mitochondrion matrix. Plays an essential role in the assembly of succinate dehydrogenase (SDH), an enzyme complex (also referred to as respiratory complex II) that is a component of both the tricarboxylic acid (TCA) cycle and the mitochondrial electron transport chain, and which couples the oxidation of succinate to fumarate with the reduction of ubiquinone (coenzyme Q) to ubiquinol. Required for flavinylation (covalent attachment of FAD) of the flavoprotein subunit of the SDH catalytic dimer. In Kluyveromyces lactis (strain ATCC 8585 / CBS 2359 / DSM 70799 / NBRC 1267 / NRRL Y-1140 / WM37) (Yeast), this protein is Succinate dehydrogenase assembly factor 2, mitochondrial.